The sequence spans 94 residues: Large ribosomal subunit protein bL27 (94 aa).

Positions 1 to 9 (MNLANLQLF) are excised as a propeptide. Residues 11 to 33 (HKKGGGSTSNGRDSQAKRLGAKA) form a disordered region.

It belongs to the bacterial ribosomal protein bL27 family. Post-translationally, the N-terminus is cleaved by ribosomal processing cysteine protease Prp.

The chain is Large ribosomal subunit protein bL27 from Streptococcus agalactiae serotype V (strain ATCC BAA-611 / 2603 V/R).